A 148-amino-acid chain; its full sequence is Hemoglobin subunit beta (148 aa).

Positions X3–H148 constitute a Globin domain. Residues H64 and H93 each contribute to the heme b site.

Belongs to the globin family. In terms of assembly, heterotetramer of two alpha chains and two beta chains. As to expression, red blood cells.

Functionally, involved in oxygen transport from gills to the various peripheral tissues. The polypeptide is Hemoglobin subunit beta (hbb) (Decapterus maruadsi (Japanese scad)).